Consider the following 1188-residue polypeptide: DNA-directed RNA polymerase subunit beta (1188 aa).

The protein belongs to the RNA polymerase beta chain family. The RNAP catalytic core consists of 2 alpha, 1 beta, 1 beta' and 1 omega subunit. When a sigma factor is associated with the core the holoenzyme is formed, which can initiate transcription.

The catalysed reaction is RNA(n) + a ribonucleoside 5'-triphosphate = RNA(n+1) + diphosphate. Functionally, DNA-dependent RNA polymerase catalyzes the transcription of DNA into RNA using the four ribonucleoside triphosphates as substrates. The sequence is that of DNA-directed RNA polymerase subunit beta from Streptococcus sanguinis (strain SK36).